A 567-amino-acid polypeptide reads, in one-letter code: Interferon lambda receptor 1 (567 aa).

An N-terminal signal peptide occupies residues 1-22 (MSAWRIRVLATLCFLWQPRVHG). At 23–229 (QLPPPQNVTL…YEGEWKFPFS (207 aa)) the chain is on the extracellular side. A Fibronectin type-III domain is found at 26-121 (PPQNVTLLSK…KSQFKEYHLD (96 aa)). A glycan (N-linked (GlcNAc...) asparagine) is linked at Asn-29. 3 cysteine pairs are disulfide-bonded: Cys-74–Cys-82, Cys-86–Cys-149, and Cys-193–Cys-215. Asn-141 is a glycosylation site (N-linked (GlcNAc...) asparagine). Residues 230–250 (ATIPVFVLLILLTSASIIWLL) traverse the membrane as a helical segment. Residues 251-567 (KQDAKHKKMP…YQHSHYMRRS (317 aa)) are Cytoplasmic-facing.

This sequence belongs to the type II cytokine receptor family. As to quaternary structure, heterodimer with IL10RB.

The protein localises to the membrane. In terms of biological role, the IFNLR1/IL10RB dimer is a receptor for the cytokine ligands IFNL2 and IFNL3 and mediates their antiviral activity. The ligand/receptor complex stimulate the activation of the JAK/STAT signaling pathway leading to the expression of IFN-stimulated genes (ISG), which contribute to the antiviral state. Determines the cell type specificity of the lambda interferon action. Shows a more restricted pattern of expression in the epithelial tissues thereby limiting responses to lambda interferons primarily to epithelial cells of the respiratory, gastrointestinal, and reproductive tracts. This chain is Interferon lambda receptor 1 (IFNLR1), found in Gallus gallus (Chicken).